The sequence spans 451 residues: Gamma-aminobutyric acid receptor subunit alpha-2 (451 aa).

A signal peptide spans 1-28 (MKTKLNSSNMQLLLFVFLAWDPARLVLA). The Extracellular segment spans residues 29-249 (NIQEDEAKNN…MTAHFHLKRK (221 aa)). N-linked (GlcNAc...) asparagine glycosylation is present at N38. R94 serves as a coordination point for 4-aminobutanoate. Residue N138 is glycosylated (N-linked (GlcNAc...) asparagine). A 4-aminobutanoate-binding site is contributed by T157. A disulfide bridge connects residues C166 and C180. The N-linked (GlcNAc...) asparagine glycan is linked to N201. Residues 250–270 (IGYFVIQTYLPCIMTVILSQV) traverse the membrane as a helical segment. Residues 271-280 (SFWLNRESVP) lie on the Cytoplasmic side of the membrane. The chain crosses the membrane as a helical span at residues 281–300 (ARTVFGVTTVLTMTTLSISA). Residues 301-311 (RNSLPKVAYAT) lie on the Extracellular side of the membrane. A helical membrane pass occupies residues 312 to 332 (AMDWFIAVCYAFVFSALIEFA). The Cytoplasmic segment spans residues 333–420 (TVNYFTKRGW…FNSVSKIDRM (88 aa)). Residues 421–441 (SRIVFPVLFGTFNLVYWATYL) form a helical membrane-spanning segment. Residues 442–451 (NREPVLGVSP) lie on the Extracellular side of the membrane.

This sequence belongs to the ligand-gated ion channel (TC 1.A.9) family. Gamma-aminobutyric acid receptor (TC 1.A.9.5) subfamily. GABRA2 sub-subfamily. In terms of assembly, heteropentamer, formed by a combination of alpha (GABRA1-6), beta (GABRB1-3), gamma (GABRG1-3), delta (GABRD), epsilon (GABRE), rho (GABRR1-3), pi (GABRP) and theta (GABRQ) subunits, each subunit exhibiting distinct physiological and pharmacological properties. Interacts with UBQLN1. Interacts with KIF21B. Interacts with LHFPL4. Interacts with SHISA7; interaction leads to the regulation of GABA(A) receptor trafficking, channel deactivation kinetics and pharmacology. In terms of processing, glycosylated.

The protein localises to the postsynaptic cell membrane. Its subcellular location is the cell membrane. The protein resides in the cytoplasmic vesicle membrane. It is found in the cell projection. It localises to the dendrite. It catalyses the reaction chloride(in) = chloride(out). Its activity is regulated as follows. Activated by pentobarbital. Inhibited by the antagonist bicuculline. Functionally, alpha subunit of the heteropentameric ligand-gated chloride channel gated by gamma-aminobutyric acid (GABA), a major inhibitory neurotransmitter in the brain. GABA-gated chloride channels, also named GABA(A) receptors (GABAAR), consist of five subunits arranged around a central pore and contain GABA active binding site(s) located at the alpha and beta subunit interface(s). When activated by GABA, GABAARs selectively allow the flow of chloride anions across the cell membrane down their electrochemical gradient. Chloride influx into the postsynaptic neuron following GABAAR opening decreases the neuron ability to generate a new action potential, thereby reducing nerve transmission. The alpha-2 subunit exhibits synaptogenic activity together with beta-2 and very little to no activity together with beta-3, the gamma-2 subunit being necessary but not sufficient to induce rapid synaptic contacts formation. The chain is Gamma-aminobutyric acid receptor subunit alpha-2 (GABRA2) from Bos taurus (Bovine).